A 274-amino-acid polypeptide reads, in one-letter code: Large ribosomal subunit protein uL2cz (274 aa).

Disordered stretches follow at residues 1-25 (MAIHLYKTSTPSTRNGTVDSQVKSN) and 224-274 (NPVD…RRSK). Polar residues predominate over residues 7 to 25 (KTSTPSTRNGTVDSQVKSN).

Belongs to the universal ribosomal protein uL2 family. As to quaternary structure, part of the 50S ribosomal subunit.

The protein resides in the plastid. It is found in the chloroplast. This is Large ribosomal subunit protein uL2cz (rpl2-A) from Atropa belladonna (Belladonna).